The following is a 362-amino-acid chain: Talin rod domain-containing protein 1 (362 aa).

The segment at 1 to 26 (MASGSAGKPTGEAASPAPASAIGGAS) is disordered. N-acetylalanine is present on alanine 2. Residues 13-26 (AASPAPASAIGGAS) are compositionally biased toward low complexity.

In terms of assembly, may homodimerize. Interacts with F-actin.

Its function is as follows. Actin-binding protein which may have an oncogenic function and regulates cell proliferation, migration and invasion in cancer cells. This Homo sapiens (Human) protein is Talin rod domain-containing protein 1.